Consider the following 442-residue polypeptide: Trigger factor (442 aa).

In terms of domain architecture, PPIase FKBP-type spans 163 to 248; sequence NDLVTINYCI…ILNVEEKQEN (86 aa).

It belongs to the FKBP-type PPIase family. Tig subfamily.

It localises to the cytoplasm. The catalysed reaction is [protein]-peptidylproline (omega=180) = [protein]-peptidylproline (omega=0). Its function is as follows. Involved in protein export. Acts as a chaperone by maintaining the newly synthesized protein in an open conformation. Functions as a peptidyl-prolyl cis-trans isomerase. In Buchnera aphidicola subsp. Schizaphis graminum (strain Sg), this protein is Trigger factor.